A 145-amino-acid polypeptide reads, in one-letter code: YIDEETMHLHHDKHHQTYVNNVNAALEKHPEIGEDLESLLADVESIPADIRQAVINNGGGHLNHALFWELMTPEQTAPSAELAAAIDATFGSFEDFKAAFTAAATTRFGSGWAWSVVNKEGKLEVTSTANQDTPLSEGKTPILGL.

The Fe(3+) site is built by His10 and His64. The Mn(2+) site is built by His10 and His64.

This sequence belongs to the iron/manganese superoxide dismutase family. Requires Mn(2+) as cofactor. It depends on Fe(3+) as a cofactor.

The catalysed reaction is 2 superoxide + 2 H(+) = H2O2 + O2. Functionally, destroys superoxide anion radicals which are normally produced within the cells and which are toxic to biological systems. Catalyzes the dismutation of superoxide anion radicals into O2 and H2O2 by successive reduction and oxidation of the transition metal ion at the active site. This chain is Superoxide dismutase [Mn/Fe] (sodA), found in Streptococcus parasanguinis.